The chain runs to 157 residues: MPRSLANAPIMILNGPNLNLLGQRQPEIYGSDTLADVEALCVKAAAAHGGTVDFRQSNHEGELVDWIHEARLNHCGIVINPAAYSHTSVAILDALNTCDGLPVVEVHISNIHQREPFRHHSYVSQRADGVVAGCGVQGYVFGVERIAALAGAGSARA.

Tyr29 (proton acceptor) is an active-site residue. Substrate contacts are provided by Asn80, His86, and Asp93. His107 functions as the Proton donor in the catalytic mechanism. Substrate-binding positions include 108–109 and Arg118; that span reads IS.

The protein belongs to the type-II 3-dehydroquinase family. Homododecamer.

It catalyses the reaction 3-dehydroquinate = 3-dehydroshikimate + H2O. The protein operates within metabolic intermediate biosynthesis; chorismate biosynthesis; chorismate from D-erythrose 4-phosphate and phosphoenolpyruvate: step 3/7. Functionally, catalyzes a trans-dehydration via an enolate intermediate. This chain is 3-dehydroquinate dehydratase (aroQ), found in Streptomyces coelicolor (strain ATCC BAA-471 / A3(2) / M145).